We begin with the raw amino-acid sequence, 298 residues long: Triosephosphate isomerase, chloroplastic (298 aa).

The segment covering 1–18 (MAARRPSPPPASPPPPRP) has biased composition (pro residues). The disordered stretch occupies residues 1–32 (MAARRPSPPPASPPPPRPRSTTTTRTTSSASA). The transit peptide at 1-43 (MAARRPSPPPASPPPPRPRSTTTTRTTSSASAAPAAAQRLVAM) directs the protein to the chloroplast. Residues 19-32 (RSTTTTRTTSSASA) are compositionally biased toward low complexity. Asn54 and Lys56 together coordinate substrate. His138 acts as the Electrophile in catalysis. At Cys186 the chain carries Cysteine derivative. Catalysis depends on Glu208, which acts as the Proton acceptor.

This sequence belongs to the triosephosphate isomerase family. In terms of assembly, homodimer.

Its subcellular location is the plastid. The protein localises to the chloroplast. The catalysed reaction is D-glyceraldehyde 3-phosphate = dihydroxyacetone phosphate. It functions in the pathway carbohydrate biosynthesis; Calvin cycle. The protein is Triosephosphate isomerase, chloroplastic of Secale cereale (Rye).